A 309-amino-acid polypeptide reads, in one-letter code: Sulfate adenylyltransferase subunit 2 (309 aa).

It belongs to the PAPS reductase family. CysD subfamily. As to quaternary structure, heterodimer composed of CysD, the smaller subunit, and CysN.

It carries out the reaction sulfate + ATP + H(+) = adenosine 5'-phosphosulfate + diphosphate. The protein operates within sulfur metabolism; hydrogen sulfide biosynthesis; sulfite from sulfate: step 1/3. With CysN forms the ATP sulfurylase (ATPS) that catalyzes the adenylation of sulfate producing adenosine 5'-phosphosulfate (APS) and diphosphate, the first enzymatic step in sulfur assimilation pathway. APS synthesis involves the formation of a high-energy phosphoric-sulfuric acid anhydride bond driven by GTP hydrolysis by CysN coupled to ATP hydrolysis by CysD. This is Sulfate adenylyltransferase subunit 2 from Methylorubrum extorquens (strain CM4 / NCIMB 13688) (Methylobacterium extorquens).